The primary structure comprises 1254 residues: Structural polyprotein (1254 aa).

The interval 1–33 (MFPFQPMYPMQPMPYRNPFAAPRRPWFPRTDPF) is necessary for nucleocapsid assembly and virus assembly. A host transcription inhibition region spans residues 33 to 68 (FLAMQVQELTRSMANLTFKQRRDAPPEGPSAKKPKK). Positions 41–48 (LTRSMANL) match the Supraphysiological nuclear export signal motif. The tract at residues 45 to 119 (MANLTFKQRR…KKPGKRQRMV (75 aa)) is disordered. The Nuclear localization signal signature appears at 64–68 (KKPKK). The span at 80–92 (GKKKKNQGKKKAK) shows a compositional bias: basic residues. The tract at residues 91–127 (AKTGPPNPKAQNGNKKKTNKKPGKRQRMVMKLESDKT) is binding to the viral RNA. Phosphothreonine occurs at positions 93 and 108. A compositionally biased stretch (basic residues) spans 104-118 (NKKKTNKKPGKRQRM). The segment at 112–126 (PGKRQRMVMKLESDK) is ribosome-binding. Residue S124 is modified to Phosphoserine. The Peptidase S3 domain occupies 126–275 (KTFPIMLEGK…KYTPENCEQW (150 aa)). The residue at position 127 (T127) is a Phosphothreonine. Residues H152, D174, and S226 each act as charge relay system in the active site. The segment at 276–287 (SLVTTMCLLANV) is functions as an uncleaved signal peptide for the precursor of protein E3/E2. At 276–701 (SLVTTMCLLA…HYYHRYPMST (426 aa)) the chain is on the extracellular side. N286, N546, and N652 each carry an N-linked (GlcNAc...) asparagine; by host glycan. A helical transmembrane segment spans residues 702 to 722 (ILGLSICAAIATVSVAASTWL). Residues 723-757 (FCRSRVACLTPYRLTPNARIPFCLAVLCCARTARA) are Cytoplasmic-facing. Residues C730, C750, and C751 are each lipidated (S-palmitoyl cysteine; by host). Positions 730 to 750 (CLTPYRLTPNARIPFCLAVLC) are transient transmembrane before p62-6K protein processing. The Extracellular segment spans residues 758–772 (ETTWESLDHLWNNNQ). The chain crosses the membrane as a helical span at residues 773–793 (QMFWIQLLIPLAALIVVTRLL). At 794 to 795 (RC) the chain is on the cytoplasmic side. The helical transmembrane segment at 796-816 (VCCVVPFLVMAGAAAGAYEHA) threads the bilayer. At 817–1224 (TTMPSQAGIS…SKTAWTWLTS (408 aa)) the chain is on the extracellular side. 4 disulfides stabilise this stretch: C861/C926, C874/C906, C875/C908, and C880/C890. The tract at residues 896–913 (VYPFMWGGAYCFCDTENT) is E1 fusion peptide loop. N946 carries N-linked (GlcNAc...) asparagine; by host glycosylation. 4 disulfide bridges follow: C1071-C1083, C1113-C1188, C1118-C1192, and C1140-C1182. The chain crosses the membrane as a helical span at residues 1225–1245 (LLGGSAVIIIIGLVLATIVAM). Over 1246-1254 (YVLTNQKHN) the chain is Cytoplasmic.

As to quaternary structure, homodimer. Homomultimer. Interacts with host karyopherin KPNA4; this interaction allows the nuclear import of the viral capsid protein. Interacts with spike glycoprotein E2. Interacts with host IRAK1; the interaction leads to inhibition of IRAK1-dependent signaling. Part of a tetrameric complex composed of host CRM1, host importin alpha/beta dimer and the viral capsid; this complex blocks the receptor-mediated transport through the nuclear pore. Interacts with host phosphatase PPP1CA; this interaction dephosphorylates the capsid protein, which increases its ability to bind to the viral genome. The precursor of protein E3/E2 and E1 form a heterodimer shortly after synthesis. In terms of assembly, interacts with spike glycoprotein E2. The precursor of protein E3/E2 and E1 form a heterodimer shortly after synthesis. Processing of the precursor of protein E3/E2 into E2 and E3 results in a heterodimer of the spike glycoproteins E2 and E1. Spike at virion surface are constituted of three E2-E1 heterodimers. After target cell attachment and endocytosis, E1 change conformation to form homotrimers. Interacts with 6K protein. Interacts with host LDLRAD3; this interaction mediates viral entry to the host cell. As to quaternary structure, interacts with spike glycoprotein E1. Processing of the precursor of protein E3/E2 into E2 and E3 results in a heterodimer of the spike glycoproteins E2 and E1. Spike at virion surface are constituted of a trimer of E2-E1 heterodimers. Interacts with 6K protein. Interacts with host LDLRAD3; this interaction mediates viral entry to the host cell. Oligomer. Interacts with spike glycoprotein E1. Interacts with spike glycoprotein E2. Structural polyprotein: Specific enzymatic cleavages in vivo yield mature proteins. Capsid protein is auto-cleaved during polyprotein translation, unmasking a signal peptide at the N-terminus of the precursor of E3/E2. The remaining polyprotein is then targeted to the host endoplasmic reticulum, where host signal peptidase cleaves it into pE2, 6K and E1 proteins. pE2 is further processed to mature E3 and E2 by host furin in trans-Golgi vesicle. Post-translationally, palmitoylated via thioester bonds. These palmitoylations may induce disruption of the C-terminus transmembrane. This would result in the reorientation of E2 C-terminus from lumenal to cytoplasmic side. In terms of processing, phosphorylated on serine and threonine residues. N-glycosylated. Post-translationally, palmitoylated via thioester bonds.

Its subcellular location is the virion. It is found in the host cytoplasm. The protein localises to the host cell membrane. The protein resides in the host nucleus. It localises to the virion membrane. The enzyme catalyses Autocatalytic release of the core protein from the N-terminus of the togavirus structural polyprotein by hydrolysis of a -Trp-|-Ser- bond.. Functionally, forms an icosahedral capsid with a T=4 symmetry composed of 240 copies of the capsid protein surrounded by a lipid membrane through which penetrate 80 spikes composed of trimers of E1-E2 heterodimers. The capsid protein binds to the viral RNA genome at a site adjacent to a ribosome binding site for viral genome translation following genome release. Possesses a protease activity that results in its autocatalytic cleavage from the nascent structural protein. Following its self-cleavage, the capsid protein transiently associates with ribosomes, and within several minutes the protein binds to viral RNA and rapidly assembles into icosahedric core particles. The resulting nucleocapsid eventually associates with the cytoplasmic domain of the spike glycoprotein E2 at the cell membrane, leading to budding and formation of mature virions. In case of infection, new virions attach to target cells and after clathrin-mediated endocytosis their membrane fuses with the host endosomal membrane. This leads to the release of the nucleocapsid into the cytoplasm, followed by an uncoating event necessary for the genomic RNA to become accessible. The uncoating might be triggered by the interaction of capsid proteins with ribosomes. Binding of ribosomes would release the genomic RNA since the same region is genomic RNA-binding and ribosome-binding. Specifically inhibits interleukin-1 receptor-associated kinase 1/IRAK1-dependent signaling during viral entry, representing a means by which the alphaviruses may evade innate immune detection and activation prior to viral gene expression. Inhibits host transcription. Forms a tetrameric complex with XPO1/CRM1 and the nuclear import receptor importin. This complex blocks the central channel of host nuclear pores thereby inhibiting the receptor-mediated nuclear transport and thus the host mRNA and rRNA transcription. The inhibition of transcription is linked to a cytopathic effect on the host cell. Provides the signal sequence for the translocation of the precursor of protein E3/E2 to the host endoplasmic reticulum. Furin-cleaved E3 remains associated with spike glycoprotein E1 and mediates pH protection of the latter during the transport via the secretory pathway. After virion release from the host cell, the assembly protein E3 is gradually released in the extracellular space. Its function is as follows. Plays a role in viral attachment to target host cell, by binding to the cell receptor LDLRAD3. Synthesized as a p62 precursor which is processed by furin at the cell membrane just before virion budding, giving rise to E2-E1 heterodimer. The p62-E1 heterodimer is stable, whereas E2-E1 is unstable and dissociate at low pH. p62 is processed at the last step, presumably to avoid E1 fusion activation before its final export to cell surface. E2 C-terminus contains a transitory transmembrane that would be disrupted by palmitoylation, resulting in reorientation of the C-terminal tail from lumenal to cytoplasmic side. This step is critical since E2 C-terminus is involved in budding by interacting with capsid proteins. This release of E2 C-terminus in cytoplasm occurs lately in protein export, and precludes premature assembly of particles at the endoplasmic reticulum membrane. In terms of biological role, acts as a viroporin that participates in virus glycoprotein processing and transport to the plasma membrane, cell permeabilization and budding of viral particles. Disrupts the calcium homeostasis of the cell, probably at the endoplasmic reticulum level. This leads to cytoplasmic calcium elevation. Because of its lipophilic properties, the 6K protein is postulated to influence the selection of lipids that interact with the transmembrane domains of the glycoproteins, which, in turn, affects the deformability of the bilayer required for the extreme curvature that occurs as budding proceeds. Present in low amount in virions, about 3% compared to viral glycoproteins. Functionally, class II viral fusion protein. Fusion activity is inactive as long as E1 is bound to E2 in mature virion. After virus attachment to cell receptor LDLRAD3 and endocytosis, acidification of the endosome would induce dissociation of E1/E2 heterodimer and concomitant trimerization of the E1 subunits. This E1 trimer is fusion active, and promotes release of viral nucleocapsid in cytoplasm after endosome and viral membrane fusion. Efficient fusion requires the presence of cholesterol and sphingolipid in the target membrane. Fusion is optimal at levels of about 1 molecule of cholesterol per 2 molecules of phospholipids, and is specific for sterols containing a 3-beta-hydroxyl group. The protein is Structural polyprotein of Bos taurus (Bovine).